We begin with the raw amino-acid sequence, 381 residues long: Cyclic AMP-AMP-GMP synthase (381 aa).

The ATP site is built by Gln-51, Ser-53, Arg-56, Asp-69, Asp-71, and Arg-109. Active-site residues include Asp-69 and Asp-71. 2 residues coordinate Mg(2+): Asp-69 and Asp-71. Residue Asp-121 is part of the active site. 2 residues coordinate Mg(2+): Asp-121 and Asp-196. Asp-196, Arg-197, Arg-204, Thr-205, Gln-210, Lys-233, and Tyr-250 together coordinate ATP. The Mg(2+) site is built by Asn-258 and Leu-260. ATP contacts are provided by Val-304 and Arg-307. The segment at 348–381 (GSKFPLPGPQGGDRNGGFTTPSKPAEPQKTGRFA) is disordered.

The protein belongs to the CD-NTase family. D02 subfamily. As to quaternary structure, monomer. Crystallizes as a Cap2 homodimer bound on each side by a CdnD monomer. Mg(2+) serves as cofactor. In bacteria expressing cap4-dncV-cap2-cap3, this protein is conjugated to a number of other proteins by Cap2, probably via this protein's C-terminal Ala residue. More conjugated DncV is found in the absence of Cap3.

It carries out the reaction GTP + 2 ATP = 3',3',3'-cAAG + 3 diphosphate. With respect to regulation, primed for activation by Cap2 which conjugates it to cellular proteins; activation is target protein-specific (green fluorescent protein does not activate the enzyme), but which protein(s) activate it is unclear. Its function is as follows. Cyclic nucleotide synthase (second messenger synthase) of a CBASS antivirus system. CBASS (cyclic oligonucleotide-based antiphage signaling system) provides immunity against bacteriophages. The CD-NTase protein (CdnD, this protein) synthesizes cyclic nucleotides in response to infection; these serve as specific second messenger signals. The signals activate a diverse range of effectors, leading to bacterial cell death and thus abortive phage infection. A type II-C(AAG) CBASS system. In terms of biological role, cyclic trinucleotide synthase that catalyzes the synthesis of 3',3',3'-cyclic AMP-AMP-GMP (cAAG) as the major product, a second messenger for cell signal transduction. Uses ATP as the first donor nucleotide, followed by GTP. Functionally, protects E.coli against phage T2 infection. When the cdnD-cap2-cap3-cap4 operon is introduced in E.coli there is a more than 10(3) decrease in the efficiency of T2 plaque formation. The operon does not protect against phage T5 and only about 10-fold against T7. Expression of cdnD-cap4 alone protects E.coli against phage T2 infection. In Enterobacter hormaechei subsp. hoffmannii (strain UCI 50), this protein is Cyclic AMP-AMP-GMP synthase.